Here is a 290-residue protein sequence, read N- to C-terminus: 33 kDa chaperonin (290 aa).

Intrachain disulfides connect cysteine 236–cysteine 238 and cysteine 269–cysteine 272.

This sequence belongs to the HSP33 family. Under oxidizing conditions two disulfide bonds are formed involving the reactive cysteines. Under reducing conditions zinc is bound to the reactive cysteines and the protein is inactive.

The protein resides in the cytoplasm. Its function is as follows. Redox regulated molecular chaperone. Protects both thermally unfolding and oxidatively damaged proteins from irreversible aggregation. Plays an important role in the bacterial defense system toward oxidative stress. This chain is 33 kDa chaperonin, found in Acholeplasma laidlawii (strain PG-8A).